Here is a 597-residue protein sequence, read N- to C-terminus: NADH-quinone oxidoreductase subunit C/D (597 aa).

Residues 1 to 188 (MKKEIKRDDV…DPYVLNKYKE (188 aa)) are NADH dehydrogenase I subunit C. The NADH dehydrogenase I subunit D stretch occupies residues 211–597 (KYMFLNLGPN…IDFVMSDVDR (387 aa)).

This sequence in the N-terminal section; belongs to the complex I 30 kDa subunit family. The protein in the C-terminal section; belongs to the complex I 49 kDa subunit family. In terms of assembly, NDH-1 is composed of 13 different subunits. Subunits NuoB, CD, E, F, and G constitute the peripheral sector of the complex.

It is found in the cell inner membrane. It carries out the reaction a quinone + NADH + 5 H(+)(in) = a quinol + NAD(+) + 4 H(+)(out). Its function is as follows. NDH-1 shuttles electrons from NADH, via FMN and iron-sulfur (Fe-S) centers, to quinones in the respiratory chain. The immediate electron acceptor for the enzyme in this species is believed to be ubiquinone. Couples the redox reaction to proton translocation (for every two electrons transferred, four hydrogen ions are translocated across the cytoplasmic membrane), and thus conserves the redox energy in a proton gradient. This chain is NADH-quinone oxidoreductase subunit C/D, found in Buchnera aphidicola subsp. Baizongia pistaciae (strain Bp).